A 607-amino-acid chain; its full sequence is Phosphogluconate dehydratase (607 aa).

[4Fe-4S] cluster is bound by residues Cys-156 and Cys-223.

This sequence belongs to the IlvD/Edd family. The cofactor is [4Fe-4S] cluster.

The catalysed reaction is 6-phospho-D-gluconate = 2-dehydro-3-deoxy-6-phospho-D-gluconate + H2O. Its pathway is carbohydrate metabolism; Entner-Doudoroff pathway. Its function is as follows. Catalyzes the dehydration of 6-phospho-D-gluconate to 2-dehydro-3-deoxy-6-phospho-D-gluconate. In Zymomonas mobilis subsp. mobilis (strain ATCC 31821 / ZM4 / CP4), this protein is Phosphogluconate dehydratase.